Consider the following 166-residue polypeptide: Protein SprT (166 aa).

The SprT-like domain maps to 21-160 (ANQHFSREFP…CQQCQQTLAF (140 aa)). His74 is a Zn(2+) binding site. The active site involves Glu75. Zn(2+) is bound at residue His78.

Belongs to the SprT family. Zn(2+) serves as cofactor.

It is found in the cytoplasm. This is Protein SprT from Vibrio atlanticus (strain LGP32) (Vibrio splendidus (strain Mel32)).